Consider the following 67-residue polypeptide: Conotoxin AbVIM (67 aa).

The first 17 residues, valine 1–threonine 17, serve as a signal peptide directing secretion. A propeptide spanning residues alanine 18–serine 40 is cleaved from the precursor. 3 disulfide bridges follow: cysteine 43/cysteine 57, cysteine 50/cysteine 61, and cysteine 56/cysteine 66.

Belongs to the conotoxin O1 superfamily. As to expression, expressed by the venom duct.

It localises to the secreted. The chain is Conotoxin AbVIM from Conus abbreviatus (Abbreviated cone).